The sequence spans 609 residues: Glutamine--fructose-6-phosphate aminotransferase [isomerizing] (609 aa).

The active-site Nucleophile; for GATase activity is C2. The Glutamine amidotransferase type-2 domain maps to 2 to 219 (CGIVGYIGGR…DGECARLTRD (218 aa)). 2 SIS domains span residues 285–424 (SSDL…LRGT) and 458–599 (LARE…VDQP). K604 acts as the For Fru-6P isomerization activity in catalysis.

As to quaternary structure, homodimer.

Its subcellular location is the cytoplasm. It catalyses the reaction D-fructose 6-phosphate + L-glutamine = D-glucosamine 6-phosphate + L-glutamate. Its function is as follows. Catalyzes the first step in hexosamine metabolism, converting fructose-6P into glucosamine-6P using glutamine as a nitrogen source. The sequence is that of Glutamine--fructose-6-phosphate aminotransferase [isomerizing] from Gloeobacter violaceus (strain ATCC 29082 / PCC 7421).